The chain runs to 215 residues: Adenylate kinase (215 aa).

10 to 15 (GAGKGT) is an ATP binding site. Positions 30-59 (STGDMFRAAMKNNTELGKKAKSFMDNGDLV) are NMP. AMP-binding positions include threonine 31, arginine 36, 57–59 (DLV), 85–88 (GFPR), and glutamine 92. The tract at residues 126–163 (GRWICRTCGKTYHEIYNPPKVPGKCDLDGGELYQREDD) is LID. An ATP-binding site is contributed by arginine 127. Cysteine 130 and cysteine 133 together coordinate Zn(2+). ATP is bound at residue 136-137 (TY). The Zn(2+) site is built by cysteine 150 and aspartate 153. Positions 160 and 171 each coordinate AMP. Glutamine 199 is an ATP binding site.

It belongs to the adenylate kinase family. Monomer.

Its subcellular location is the cytoplasm. It carries out the reaction AMP + ATP = 2 ADP. It participates in purine metabolism; AMP biosynthesis via salvage pathway; AMP from ADP: step 1/1. Its function is as follows. Catalyzes the reversible transfer of the terminal phosphate group between ATP and AMP. Plays an important role in cellular energy homeostasis and in adenine nucleotide metabolism. In Listeria innocua serovar 6a (strain ATCC BAA-680 / CLIP 11262), this protein is Adenylate kinase.